We begin with the raw amino-acid sequence, 325 residues long: GTP 3',8-cyclase (325 aa).

In terms of domain architecture, Radical SAM core spans 4 to 219; that stretch reads NYNRNINYLR…HGLQQKFGLL (216 aa). Arg-13 provides a ligand contact to GTP. [4Fe-4S] cluster is bound by residues Cys-20 and Cys-24. S-adenosyl-L-methionine is bound at residue Tyr-26. Position 27 (Cys-27) interacts with [4Fe-4S] cluster. Arg-63 serves as a coordination point for GTP. S-adenosyl-L-methionine is bound at residue Gly-67. A GTP-binding site is contributed by Thr-94. Ser-118 contributes to the S-adenosyl-L-methionine binding site. Residue Lys-155 participates in GTP binding. Met-189 lines the S-adenosyl-L-methionine pocket. Positions 254 and 257 each coordinate [4Fe-4S] cluster. 259–261 is a binding site for GTP; it reads RLR. Residue Cys-271 coordinates [4Fe-4S] cluster.

This sequence belongs to the radical SAM superfamily. MoaA family. Monomer and homodimer. It depends on [4Fe-4S] cluster as a cofactor.

The enzyme catalyses GTP + AH2 + S-adenosyl-L-methionine = (8S)-3',8-cyclo-7,8-dihydroguanosine 5'-triphosphate + 5'-deoxyadenosine + L-methionine + A + H(+). The protein operates within cofactor biosynthesis; molybdopterin biosynthesis. Its function is as follows. Catalyzes the cyclization of GTP to (8S)-3',8-cyclo-7,8-dihydroguanosine 5'-triphosphate. The sequence is that of GTP 3',8-cyclase from Desulforamulus reducens (strain ATCC BAA-1160 / DSM 100696 / MI-1) (Desulfotomaculum reducens).